The sequence spans 182 residues: Autophagy-related protein 31 (182 aa).

Positions 105-134 (LTSGNDTGGDAGKKSGDISDPAAGPDVPRE) are disordered.

It localises to the cytoplasm. It is found in the cytoskeleton. The protein resides in the preautophagosomal structure. Plays a role in starvation-induced autophagy. Involved in mitophagy. Functions with ATG17 and ATG29 at the preautophagosomal structure (PAS) in order to form normal autophagosomes under starvation conditions. May be involved in microtubule function, such as chromosome segregation and karyogamy. This chain is Autophagy-related protein 31 (CIS1), found in Candida glabrata (strain ATCC 2001 / BCRC 20586 / JCM 3761 / NBRC 0622 / NRRL Y-65 / CBS 138) (Yeast).